The following is a 429-amino-acid chain: Maltoporin 2 (429 aa).

Positions 1–25 are cleaved as a signal peptide; the sequence is MMITLRKLPLAVAVAAGVMSAQALA. Over residues 397–412 the composition is skewed to polar residues; sequence GLQTKDSSGSGAFTSS. The segment at 397-416 is disordered; sequence GLQTKDSSGSGAFTSSRGDD.

It belongs to the porin LamB (TC 1.B.3) family. In terms of assembly, homotrimer formed of three 18-stranded antiparallel beta-barrels, containing three independent channels.

Its subcellular location is the cell outer membrane. It catalyses the reaction beta-maltose(in) = beta-maltose(out). Its function is as follows. Involved in the transport of maltose and maltodextrins. The chain is Maltoporin 2 from Klebsiella pneumoniae subsp. pneumoniae (strain ATCC 700721 / MGH 78578).